We begin with the raw amino-acid sequence, 496 residues long: Lysine--tRNA ligase (496 aa).

Residues Glu409 and Glu416 each coordinate Mg(2+).

The protein belongs to the class-II aminoacyl-tRNA synthetase family. In terms of assembly, homodimer. The cofactor is Mg(2+).

The protein localises to the cytoplasm. It carries out the reaction tRNA(Lys) + L-lysine + ATP = L-lysyl-tRNA(Lys) + AMP + diphosphate. The polypeptide is Lysine--tRNA ligase (Streptococcus mutans serotype c (strain ATCC 700610 / UA159)).